Here is a 246-residue protein sequence, read N- to C-terminus: MHILLSNDDGIQAEGIKTLAKELRKFAQVTVVAPDRNRSAASSSLTLVEPLRPMKLDNGDYSINGTPADCVHLALNGFLSGQIDLVVSGINAGVNLGDDVIYSGTVAAALEGRHLSLPAIAVSLDGRQHYESAAIIVSQLIPKLYGRLLKSREIININVPDLPYSEIKGIKVCHLGYRAAAADIIKQKDPRGEEIYWIGPIGLAENESEGTDFHAVKNGYVSITPIQTDMTAYHSMTALQQWLDKE.

A divalent metal cation is bound by residues Asp-8, Asp-9, Ser-39, and Asn-91.

Belongs to the SurE nucleotidase family. A divalent metal cation is required as a cofactor.

It is found in the cytoplasm. It catalyses the reaction a ribonucleoside 5'-phosphate + H2O = a ribonucleoside + phosphate. In terms of biological role, nucleotidase that shows phosphatase activity on nucleoside 5'-monophosphates. The sequence is that of 5'-nucleotidase SurE from Histophilus somni (strain 129Pt) (Haemophilus somnus).